Reading from the N-terminus, the 153-residue chain is Small ribosomal subunit protein uS19 (153 aa).

The protein belongs to the universal ribosomal protein uS19 family.

The chain is Small ribosomal subunit protein uS19 (RPS15) from Elaeis oleifera (American oil palm).